We begin with the raw amino-acid sequence, 361 residues long: NudC domain-containing protein 3 (361 aa).

Positions 87-97 are enriched in basic and acidic residues; the sequence is KIRRKEEEEAK. Disordered regions lie at residues 87–106 and 124–158; these read KIRR…AAEK and LDGH…VAGA. The residue at position 146 (Ser-146) is a Phosphoserine. Over residues 148 to 158 the composition is skewed to low complexity; that stretch reads EAEAPGAVAGA. In terms of domain architecture, CS spans 185–277; the sequence is AVRENYTWSQ…VGEYWWNAIL (93 aa). Phosphoserine occurs at positions 340 and 355.

The protein is NudC domain-containing protein 3 (NUDCD3) of Homo sapiens (Human).